Reading from the N-terminus, the 474-residue chain is Ankyrin repeat, SAM and basic leucine zipper domain-containing protein 1 (474 aa).

Positions methionine 1–arginine 31 are disordered. 3 positions are modified to phosphoserine: serine 16, serine 17, and serine 19. ANK repeat units lie at residues glutamate 43–serine 72, phenylalanine 76–phenylalanine 105, aspartate 108–alanine 142, lysine 146–alanine 175, asparagine 179–leucine 208, and aspartate 212–glycine 241. Residues serine 270–glutamine 333 enclose the SAM domain.

As to quaternary structure, interacts with DDX4, PIWIL1, RANBP9 and TDRD1.

Its subcellular location is the cytoplasm. Plays a central role during spermatogenesis by repressing transposable elements and preventing their mobilization, which is essential for the germline integrity. Acts via the piRNA metabolic process, which mediates the repression of transposable elements during meiosis by forming complexes composed of piRNAs and Piwi proteins and governs the methylation and subsequent repression of transposons. Its association with pi-bodies suggests a participation in the primary piRNAs metabolic process. Required prior to the pachytene stage to facilitate the production of multiple types of piRNAs, including those associated with repeats involved in the regulation of retrotransposons. May act by mediating protein-protein interactions during germ cell maturation. This is Ankyrin repeat, SAM and basic leucine zipper domain-containing protein 1 (ASZ1) from Ornithorhynchus anatinus (Duckbill platypus).